The primary structure comprises 1755 residues: Transposon Ty1-JR1 Gag-Pol polyprotein (1755 aa).

Residues 1–16 show a composition bias toward low complexity; that stretch reads MESQQLSQHSHISHGS. Disordered regions lie at residues 1-93, 126-173, and 352-421; these read MESQ…MMTQ, PQSQ…RPPP, and GSRN…SKST. Polar residues-rich tracts occupy residues 48-60 and 127-152; these read TKANSQQTTTPAS and QSQFPQYPSSVGTPLSTPSPESGNTF. The span at 153–165 shows a compositional bias: low complexity; the sequence is TDSSSADSDMTST. Positions 299 to 401 are RNA-binding; sequence NNGIHINNKV…NSKSKTARAH (103 aa). A compositionally biased stretch (low complexity) spans 402 to 418; the sequence is NVSTSNNSPSTDNDSIS. Phosphoserine is present on Ser416. Catalysis depends on Asp461, which acts as the For protease activity; shared with dimeric partner. Residues 583-640 are integrase-type zinc finger-like; that stretch reads NVHTSESTRKYPYPFIHRMLAHANAQTIRYSLKNNTITYFNESDVDWSSAIDYQCPDC. The region spanning 660–835 is the Integrase catalytic domain; sequence NSYEPFQYLH…AGLDISTLLP (176 aa). Mg(2+) contacts are provided by Asp671 and Asp736. Disordered regions lie at residues 956-1087, 1092-1111, and 1130-1186; these read SKAV…ETEK, RSPSIDASPPENNSSHNIVP, and DLPL…EDNE. A compositionally biased stretch (low complexity) spans 960-969; that stretch reads SPTDSTPPST. The span at 1005 to 1015 shows a compositional bias: polar residues; the sequence is STPQISNIEST. Residues 1038-1053 show a composition bias toward basic and acidic residues; that stretch reads ESSHASKSKDFRHSDS. Polar residues-rich tracts occupy residues 1054 to 1082 and 1101 to 1111; these read YSENETNHTNVPISSTGGTNNKTVPQISD and PENNSSHNIVP. The short motif at 1178–1212 is the Bipartite nuclear localization signal element; the sequence is KKRSLEDNETEIKVSRDTWNTKNMRSLEPPRSKKR. The Reverse transcriptase Ty1/copia-type domain occupies 1338–1476; it reads NNYYITQLDI…DILGLEIKYQ (139 aa). Residues Asp1346, Asp1427, Asp1428, Asp1610, Glu1652, and Asp1685 each coordinate Mg(2+). One can recognise an RNase H Ty1/copia-type domain in the interval 1610 to 1752; it reads DASYGNQPYY…IKTFKLLTNK (143 aa).

As to quaternary structure, the capsid protein forms a homotrimer, from which the VLPs are assembled. The protease is a homodimer, whose active site consists of two apposed aspartic acid residues. In terms of processing, initially, virus-like particles (VLPs) are composed of the structural unprocessed proteins Gag and Gag-Pol, and also contain the host initiator methionine tRNA (tRNA(i)-Met) which serves as a primer for minus-strand DNA synthesis, and a dimer of genomic Ty RNA. Processing of the polyproteins occurs within the particle and proceeds by an ordered pathway, called maturation. First, the protease (PR) is released by autocatalytic cleavage of the Gag-Pol polyprotein yielding capsid protein p45 and a Pol-p154 precursor protein. This cleavage is a prerequisite for subsequent processing of Pol-p154 at the remaining sites to release the mature structural and catalytic proteins. Maturation takes place prior to the RT reaction and is required to produce transposition-competent VLPs.

The protein resides in the cytoplasm. The protein localises to the nucleus. It carries out the reaction DNA(n) + a 2'-deoxyribonucleoside 5'-triphosphate = DNA(n+1) + diphosphate. It catalyses the reaction Endonucleolytic cleavage to 5'-phosphomonoester.. Its function is as follows. Capsid protein (CA) is the structural component of the virus-like particle (VLP), forming the shell that encapsulates the retrotransposons dimeric RNA genome. The particles are assembled from trimer-clustered units and there are holes in the capsid shells that allow for the diffusion of macromolecules. CA also has nucleocapsid-like chaperone activity, promoting primer tRNA(i)-Met annealing to the multipartite primer-binding site (PBS), dimerization of Ty1 RNA and initiation of reverse transcription. In terms of biological role, the aspartyl protease (PR) mediates the proteolytic cleavages of the Gag and Gag-Pol polyproteins after assembly of the VLP. Functionally, reverse transcriptase/ribonuclease H (RT) is a multifunctional enzyme that catalyzes the conversion of the retro-elements RNA genome into dsDNA within the VLP. The enzyme displays a DNA polymerase activity that can copy either DNA or RNA templates, and a ribonuclease H (RNase H) activity that cleaves the RNA strand of RNA-DNA heteroduplexes during plus-strand synthesis and hydrolyzes RNA primers. The conversion leads to a linear dsDNA copy of the retrotransposon that includes long terminal repeats (LTRs) at both ends. Integrase (IN) targets the VLP to the nucleus, where a subparticle preintegration complex (PIC) containing at least integrase and the newly synthesized dsDNA copy of the retrotransposon must transit the nuclear membrane. Once in the nucleus, integrase performs the integration of the dsDNA into the host genome. The sequence is that of Transposon Ty1-JR1 Gag-Pol polyprotein (TY1B-JR1) from Saccharomyces cerevisiae (strain ATCC 204508 / S288c) (Baker's yeast).